We begin with the raw amino-acid sequence, 152 residues long: uncharacterized protein (152 aa).

The signal sequence occupies residues 1–23; the sequence is MYSILIACLVLLLCLVIYVGHRA.

It belongs to the asfivirus EP152R family.

The protein localises to the virion. This is an uncharacterized protein from Ornithodoros (relapsing fever ticks).